The sequence spans 232 residues: Large ribosomal subunit protein uL1 (232 aa).

Belongs to the universal ribosomal protein uL1 family. In terms of assembly, part of the 50S ribosomal subunit.

In terms of biological role, binds directly to 23S rRNA. The L1 stalk is quite mobile in the ribosome, and is involved in E site tRNA release. Functionally, protein L1 is also a translational repressor protein, it controls the translation of the L11 operon by binding to its mRNA. The protein is Large ribosomal subunit protein uL1 of Christiangramia forsetii (strain DSM 17595 / CGMCC 1.15422 / KT0803) (Gramella forsetii).